The chain runs to 431 residues: Enolase (431 aa).

Glutamine 164 lines the (2R)-2-phosphoglycerate pocket. Catalysis depends on glutamate 206, which acts as the Proton donor. The Mg(2+) site is built by aspartate 243, glutamate 288, and aspartate 315. (2R)-2-phosphoglycerate contacts are provided by lysine 340, arginine 369, serine 370, and lysine 391. Lysine 340 acts as the Proton acceptor in catalysis.

This sequence belongs to the enolase family. The cofactor is Mg(2+).

The protein localises to the cytoplasm. It localises to the secreted. The protein resides in the cell surface. It catalyses the reaction (2R)-2-phosphoglycerate = phosphoenolpyruvate + H2O. The protein operates within carbohydrate degradation; glycolysis; pyruvate from D-glyceraldehyde 3-phosphate: step 4/5. Its function is as follows. Catalyzes the reversible conversion of 2-phosphoglycerate (2-PG) into phosphoenolpyruvate (PEP). It is essential for the degradation of carbohydrates via glycolysis. This chain is Enolase, found in Fervidobacterium nodosum (strain ATCC 35602 / DSM 5306 / Rt17-B1).